A 293-amino-acid chain; its full sequence is Protein BOBBER 2 (293 aa).

Ala2 is modified (N-acetylalanine). Residues 50–80 (EKEIVAAVMAAKQRLREAEKKKLEKESVKSM) are a coiled coil. Composition is skewed to basic and acidic residues over residues 67–102 (AEKK…KEES) and 110–120 (EIEKPKEEKES). Residues 67–125 (AEKKKLEKESVKSMEVEKPKKDSLKPTELEKPKEESLMATDPMEIEKPKEEKESGPIVP) are disordered. A CS domain is found at 131 to 220 (LDFEKYSWGQ…DQMEWWKYCV (90 aa)).

The protein resides in the cytoplasm. It localises to the cytoplasmic granule. Small heat shock protein required for the establishment of auxin gradients and for patterning of the apical domain of the embryo. Involved in the specification of the cotyledon primordia. Also required for normal inflorescence and floral meristem function, normal developmental patterning and thermotolerance. Acts as a molecular chaperone. The sequence is that of Protein BOBBER 2 (BOB2) from Arabidopsis thaliana (Mouse-ear cress).